The following is a 98-amino-acid chain: Small ribosomal subunit protein bS6 (98 aa).

The protein belongs to the bacterial ribosomal protein bS6 family.

Binds together with bS18 to 16S ribosomal RNA. This chain is Small ribosomal subunit protein bS6, found in Staphylococcus aureus (strain NCTC 8325 / PS 47).